The primary structure comprises 248 residues: Tetraspanin-16 (248 aa).

Residues 1–7 lie on the Cytoplasmic side of the membrane; that stretch reads MSEIRTG. Residues 8-28 traverse the membrane as a helical segment; that stretch reads FLTMATIILICIGLTMTGTGL. Residues 29 to 44 are Extracellular-facing; that stretch reads YYRKTVSKCIRETDGS. A helical transmembrane segment spans residues 45–65; the sequence is FVVIGLLLLVIPQFALYAICC. The Cytoplasmic portion of the chain corresponds to 66 to 69; sequence HSKR. The chain crosses the membrane as a helical span at residues 70–90; it reads MFTIYIYAMIFVSIVLGGYSL. The Extracellular segment spans residues 91-208; the sequence is KCFIYNTTFG…MSILKAIVHQ (118 aa). N-linked (GlcNAc...) asparagine glycosylation is found at Asn96 and Asn141. Residues 209–229 traverse the membrane as a helical segment; it reads WKYLSMFSYPALFLVCLSLAI. At 230-248 the chain is on the cytoplasmic side; the sequence is SRSIMDTFDEPDDYRGYYS.

It belongs to the tetraspanin (TM4SF) family.

Its subcellular location is the membrane. May be involved in the regulation of cell differentiation. This Arabidopsis thaliana (Mouse-ear cress) protein is Tetraspanin-16 (TET16).